The sequence spans 672 residues: Ubiquitin carboxyl-terminal hydrolase 19 (672 aa).

A helical transmembrane segment spans residues 11-31; sequence NSFTQLILTLFFVSIGLLYFV. 8 residues coordinate Zn(2+): C64, C67, C75, C78, C84, C88, H97, and C101. An MYND-type zinc finger spans residues 64 to 101; that stretch reads CSVCGKATTKKCSRCKSVRYCSAACQTSDWKSGHKLKC. The region spanning 174-480 is the USP domain; sequence CGLTNCGNSC…RAYMLLYSRV (307 aa). C183 (nucleophile) is an active-site residue. H439 serves as the catalytic Proton acceptor. The disordered stretch occupies residues 484 to 672; it reads PSNLRSEESQ…HSDTEMIDAQ (189 aa). The segment covering 488–499 has biased composition (basic and acidic residues); that stretch reads RSEESQDEKKTD. Residues 500–527 are compositionally biased toward polar residues; it reads TLNTESNQDGSVESSGVGTNDTSVSSLC. Composition is skewed to basic and acidic residues over residues 533–543 and 553–594; these read HSEDPEYEKES and EEGK…KEDP. Positions 606 to 615 are enriched in polar residues; that stretch reads LDITTPSPSA. Basic and acidic residues predominate over residues 623 to 666; the sequence is ENERSDTESKPLEKEHSDTESNKPLEKEHLDSESKPLEKEHSDT.

This sequence belongs to the peptidase C19 family.

It localises to the membrane. The catalysed reaction is Thiol-dependent hydrolysis of ester, thioester, amide, peptide and isopeptide bonds formed by the C-terminal Gly of ubiquitin (a 76-residue protein attached to proteins as an intracellular targeting signal).. Recognizes and hydrolyzes the peptide bond at the C-terminal Gly of ubiquitin. Involved in the processing of poly-ubiquitin precursors as well as that of ubiquitinated proteins. The polypeptide is Ubiquitin carboxyl-terminal hydrolase 19 (UBP19) (Arabidopsis thaliana (Mouse-ear cress)).